Consider the following 487-residue polypeptide: Aspartyl/glutamyl-tRNA(Asn/Gln) amidotransferase subunit B (487 aa).

The protein belongs to the GatB/GatE family. GatB subfamily. Heterotrimer of A, B and C subunits.

It catalyses the reaction L-glutamyl-tRNA(Gln) + L-glutamine + ATP + H2O = L-glutaminyl-tRNA(Gln) + L-glutamate + ADP + phosphate + H(+). The enzyme catalyses L-aspartyl-tRNA(Asn) + L-glutamine + ATP + H2O = L-asparaginyl-tRNA(Asn) + L-glutamate + ADP + phosphate + 2 H(+). Its function is as follows. Allows the formation of correctly charged Asn-tRNA(Asn) or Gln-tRNA(Gln) through the transamidation of misacylated Asp-tRNA(Asn) or Glu-tRNA(Gln) in organisms which lack either or both of asparaginyl-tRNA or glutaminyl-tRNA synthetases. The reaction takes place in the presence of glutamine and ATP through an activated phospho-Asp-tRNA(Asn) or phospho-Glu-tRNA(Gln). The polypeptide is Aspartyl/glutamyl-tRNA(Asn/Gln) amidotransferase subunit B (Leptospira biflexa serovar Patoc (strain Patoc 1 / Ames)).